A 214-amino-acid chain; its full sequence is Proteasome subunit beta type-6 (214 aa).

A propeptide spans 1 to 14 (removed in mature form); it reads MEAPEWLDNAVDLG. Residue T15 is the Nucleophile of the active site.

This sequence belongs to the peptidase T1B family. In terms of assembly, the 26S proteasome consists of a 20S proteasome core and two 19S regulatory subunits. The 20S proteasome core is composed of 28 subunits that are arranged in four stacked rings, resulting in a barrel-shaped structure. The two end rings are each formed by seven alpha subunits, and the two central rings are each formed by seven beta subunits. The catalytic chamber with the active sites is on the inside of the barrel.

It is found in the cytoplasm. The protein localises to the nucleus. It carries out the reaction Cleavage of peptide bonds with very broad specificity.. The proteasome is a multicatalytic proteinase complex which is characterized by its ability to cleave peptides with Arg, Phe, Tyr, Leu, and Glu adjacent to the leaving group at neutral or slightly basic pH. The proteasome has an ATP-dependent proteolytic activity. The polypeptide is Proteasome subunit beta type-6 (psmB6) (Dictyostelium discoideum (Social amoeba)).